The chain runs to 216 residues: Protein-L-isoaspartate O-methyltransferase (216 aa).

The active site involves Ser66.

It belongs to the methyltransferase superfamily. L-isoaspartyl/D-aspartyl protein methyltransferase family.

It is found in the cytoplasm. It carries out the reaction [protein]-L-isoaspartate + S-adenosyl-L-methionine = [protein]-L-isoaspartate alpha-methyl ester + S-adenosyl-L-homocysteine. Catalyzes the methyl esterification of L-isoaspartyl residues in peptides and proteins that result from spontaneous decomposition of normal L-aspartyl and L-asparaginyl residues. It plays a role in the repair and/or degradation of damaged proteins. The polypeptide is Protein-L-isoaspartate O-methyltransferase (Dechloromonas aromatica (strain RCB)).